Here is a 354-residue protein sequence, read N- to C-terminus: Transcription activator of gluconeogenesis ERT1-1 (354 aa).

The segment at 1 to 29 is disordered; that stretch reads MSFYPILRGPAKQESPPPPPAPKKRRKTA. Positions 32 to 60 form a DNA-binding region, zn(2)-C6 fungal-type; sequence CLHCQKAHLTCDEGRPCARCIKKNMGDQC. 2 disordered regions span residues 71 to 111 and 128 to 169; these read LVGL…FGSS and DTSS…QGSP. A compositionally biased stretch (low complexity) spans 81–98; it reads QATQQKQQQQQQQQQAVQ. Residues 159–169 show a composition bias toward polar residues; that stretch reads SQTAGTPQGSP.

Belongs to the ERT1/acuK family.

Its subcellular location is the nucleus. Its function is as follows. Transcription factor which regulates nonfermentable carbon utilization. Activator of gluconeogenetic genes. The chain is Transcription activator of gluconeogenesis ERT1-1 (ERT1-1) from Yarrowia lipolytica (strain CLIB 122 / E 150) (Yeast).